Here is a 591-residue protein sequence, read N- to C-terminus: Aspartate--tRNA ligase (591 aa).

Glutamate 173 is a binding site for L-aspartate. Residues 197-200 (QLFK) form an aspartate region. Arginine 219 serves as a coordination point for L-aspartate. ATP-binding positions include 219–221 (RDE) and glutamine 228. Histidine 448 serves as a coordination point for L-aspartate. Residue glutamate 482 participates in ATP binding. Arginine 489 is a binding site for L-aspartate. Residue 534-537 (GLDR) coordinates ATP.

Belongs to the class-II aminoacyl-tRNA synthetase family. Type 1 subfamily. Homodimer.

The protein localises to the cytoplasm. The enzyme catalyses tRNA(Asp) + L-aspartate + ATP = L-aspartyl-tRNA(Asp) + AMP + diphosphate. Functionally, catalyzes the attachment of L-aspartate to tRNA(Asp) in a two-step reaction: L-aspartate is first activated by ATP to form Asp-AMP and then transferred to the acceptor end of tRNA(Asp). In Shewanella sp. (strain MR-4), this protein is Aspartate--tRNA ligase.